A 129-amino-acid chain; its full sequence is 4-amino-4-deoxychorismate mutase (129 aa).

One can recognise a Chorismate mutase domain in the interval 16–107; that stretch reads AAATDPLDAL…ETCRLEDEWI (92 aa).

The catalysed reaction is 4-amino-4-deoxychorismate = 4-amino-4-deoxyprephenate. It functions in the pathway antibiotic biosynthesis. Its function is as follows. Involved in pristinamycin I biosynthesis. Probably catalyzes the conversion of 4-amino-4-deoxychorismate to 4-amino-4-deoxyprephenate. The chain is 4-amino-4-deoxychorismate mutase from Streptomyces pristinaespiralis.